The following is a 512-amino-acid chain: Glutathione-binding protein GsiB (512 aa).

The signal sequence occupies residues 1-26 (MARAVHRSGLVALGIATALMASCAFA).

It belongs to the bacterial solute-binding protein 5 family. As to quaternary structure, the complex is composed of two ATP-binding proteins (GsiA), two transmembrane proteins (GsiC and GsiD) and a solute-binding protein (GsiB).

It localises to the periplasm. Its function is as follows. Part of the ABC transporter complex GsiABCD involved in glutathione import. Binds glutathione. The sequence is that of Glutathione-binding protein GsiB from Escherichia coli O157:H7.